A 692-amino-acid polypeptide reads, in one-letter code: Methionine--tRNA ligase (692 aa).

The 'HIGH' region signature appears at 12 to 22; the sequence is PYANGPLHLGH. Residues Cys143, Cys146, Cys156, and Cys159 each contribute to the Zn(2+) site. The 'KMSKS' region signature appears at 330–334; that stretch reads KMSKS. Lys333 contacts ATP. Positions 554-563 are enriched in low complexity; that stretch reads AAAAPAAKPA. The disordered stretch occupies residues 554–575; that stretch reads AAAAPAAKPAAPAPAPAPAKDE. A tRNA-binding domain is found at 589 to 692; it reads DFAKLDLRIG…SGAQPGMPVR (104 aa).

The protein belongs to the class-I aminoacyl-tRNA synthetase family. MetG type 1 subfamily. As to quaternary structure, homodimer. Zn(2+) is required as a cofactor.

The protein localises to the cytoplasm. The enzyme catalyses tRNA(Met) + L-methionine + ATP = L-methionyl-tRNA(Met) + AMP + diphosphate. Functionally, is required not only for elongation of protein synthesis but also for the initiation of all mRNA translation through initiator tRNA(fMet) aminoacylation. This chain is Methionine--tRNA ligase, found in Stenotrophomonas maltophilia (strain K279a).